Reading from the N-terminus, the 432-residue chain is Glutamate-1-semialdehyde 2,1-aminomutase 1 (432 aa).

Lys272 is subject to N6-(pyridoxal phosphate)lysine.

This sequence belongs to the class-III pyridoxal-phosphate-dependent aminotransferase family. HemL subfamily. As to quaternary structure, homodimer. Requires pyridoxal 5'-phosphate as cofactor.

The protein localises to the cytoplasm. The catalysed reaction is (S)-4-amino-5-oxopentanoate = 5-aminolevulinate. It functions in the pathway porphyrin-containing compound metabolism; protoporphyrin-IX biosynthesis; 5-aminolevulinate from L-glutamyl-tRNA(Glu): step 2/2. The protein is Glutamate-1-semialdehyde 2,1-aminomutase 1 of Exiguobacterium sp. (strain ATCC BAA-1283 / AT1b).